The primary structure comprises 296 residues: Galectin-3 (296 aa).

A compositionally biased stretch (polar residues) spans 1–11 (MADSFSLNDAL). Residues 1–150 (MADSFSLNDA…PSAPGAYPAA (150 aa)) form a disordered region. A2 carries the N-acetylalanine modification. Phosphoserine; by CK1 occurs at positions 6 and 12. 2 stretches are compositionally biased toward low complexity: residues 12-31 (SGSGNPNPQGWPGPWGNQPA) and 38-47 (GASYPGAYPG). 8 tandem repeats follow at residues 36–44 (YPGASYPGA), 45–53 (YPGQAPPGG), 54–62 (YPGQAPPGG), 63–71 (YPGQAPPGG), 72–80 (YPGQAPPGG), 81–89 (YPGQAPPGG), 90–98 (YPGQAPPGG), and 99–107 (YPGQAPPGT). Residues 36 to 143 (YPGASYPGAY…AYPPPGQPSA (108 aa)) are 12 X 9 AA tandem repeats of Y-P-G-X(3)-P-G-[GAT]. Residues 48 to 120 (QAPPGGYPGQ…PTAPAYPGPT (73 aa)) show a composition bias toward pro residues. The stretch at 108–115 (YPGPTAPA) is one 9; approximate repeat. Repeat 10 spans residues 116-124 (YPGPTAPGT). A compositionally biased stretch (low complexity) spans 121–133 (APGTQPGQPSGPG). The stretch at 125-134 (QPGQPSGPGA) is one 11; approximate repeat. The stretch at 135 to 143 (YPPPGQPSA) is one 12; approximate repeat. In terms of domain architecture, Galectin spans 164 to 294 (YDLPLPGGVK…DIDLTSASYA (131 aa)). A beta-D-galactoside is bound at residue 227 to 233 (WGKEERQ). Positions 272–287 (KNLPEISKLGISGDID) match the Nuclear export signal motif.

As to quaternary structure, probably forms homo- or heterodimers. Interacts with DMBT1. Interacts with CD6 and ALCAM. Forms a complex with the ITGA3, ITGB1 and CSPG4. Interacts with LGALS3BP, LYPD3, ZFTRAF1 and UACA. Interacts with TRIM16; this interaction mediates autophagy of damage endomembranes. Interacts with cargo receptor TMED10; the interaction mediates the translocation from the cytoplasm into the ERGIC (endoplasmic reticulum-Golgi intermediate compartment) and thereby secretion. Interacts with and inhibits by binding NCR3/NKp30. The degree of phosphorylation is higher in the cytoplasmic form than in the nuclear form. In protein isolated from a canine kidney cell line, 90% of the phosphate was on Ser-6 and 10% was on Ser-12.

It localises to the cytoplasm. Its subcellular location is the nucleus. It is found in the secreted. In terms of biological role, galactose-specific lectin which binds IgE. May mediate with the alpha-3, beta-1 integrin the stimulation by CSPG4 of endothelial cells migration. Together with DMBT1, required for terminal differentiation of columnar epithelial cells during early embryogenesis. In the nucleus: acts as a pre-mRNA splicing factor. Involved in acute inflammatory responses including neutrophil activation and adhesion, chemoattraction of monocytes macrophages, opsonization of apoptotic neutrophils, and activation of mast cells. Together with TRIM16, coordinates the recognition of membrane damage with mobilization of the core autophagy regulators ATG16L1 and BECN1 in response to damaged endomembranes. When secreted, interacts with NK cell-activating receptor NCR3/NKp30 acting as an inhibitory ligand which antagonizes NK cell attack. In Canis lupus familiaris (Dog), this protein is Galectin-3 (LGALS3).